The primary structure comprises 345 residues: Tryptophan--tRNA ligase (345 aa).

ATP is bound by residues 22–24 (QPS) and 30–31 (GN). A 'HIGH' region motif is present at residues 23–31 (PSGELTIGN). Residue D146 participates in L-tryptophan binding. Residues 158–160 (GID), V197, and 206–210 (KMSKS) contribute to the ATP site. The 'KMSKS' region signature appears at 206–210 (KMSKS).

Belongs to the class-I aminoacyl-tRNA synthetase family. Homodimer.

The protein localises to the cytoplasm. The catalysed reaction is tRNA(Trp) + L-tryptophan + ATP = L-tryptophyl-tRNA(Trp) + AMP + diphosphate + H(+). In terms of biological role, catalyzes the attachment of tryptophan to tRNA(Trp). In Photorhabdus laumondii subsp. laumondii (strain DSM 15139 / CIP 105565 / TT01) (Photorhabdus luminescens subsp. laumondii), this protein is Tryptophan--tRNA ligase.